The primary structure comprises 471 residues: Type 2 glycosyltransferase (471 aa).

Residues 4-24 form a helical membrane-spanning segment; sequence ILGWFWAFVSAFVLRYLRTIV. N-linked (GlcNAc...) asparagine glycans are attached at residues N29, N88, and N222. 3 helical membrane passes run 305-325, 339-359, and 368-388; these read CLQT…FYSL, MAFT…KLWG, and VIYI…KFWG. N458 is a glycosylation site (N-linked (GlcNAc...) asparagine).

It belongs to the GT2 glycosyltransferase family.

The protein resides in the cell membrane. Functionally, glycosyltransferase involved in the maintenance of the outermost surface of the fungal cell wall. Likely functions in the synthesis of a currently unknown, potentially minor but widespread, extracellular or outer cell wall polysaccharide which plays a key role in facilitating many interactions between plants and fungi by enabling hyphal growth on solid matrices. The protein is Type 2 glycosyltransferase of Zymoseptoria tritici (strain CBS 115943 / IPO323) (Speckled leaf blotch fungus).